A 535-amino-acid chain; its full sequence is Cytochrome P450 4c3 (535 aa).

Glu-342 and Cys-481 together coordinate heme.

This sequence belongs to the cytochrome P450 family. Heme is required as a cofactor.

The protein resides in the endoplasmic reticulum membrane. It localises to the microsome membrane. May be involved in the metabolism of insect hormones and in the breakdown of synthetic insecticides. In Drosophila melanogaster (Fruit fly), this protein is Cytochrome P450 4c3 (Cyp4c3).